The following is a 132-amino-acid chain: mRNA interferase toxin YafO (132 aa).

Probably forms a complex with the antitoxin YafN which inhibits the mRNA interferase activity.

In terms of biological role, toxic component of a type II toxin-antitoxin (TA) system. A translation-dependent mRNA interferase. Overexpression causes cessation of cell growth and inhibits cell proliferation via inhibition of translation; this blockage is overcome by subsequent expression of antitoxin YafN. Overexpression causes cleavage of a number of mRNAs in a ribosome-dependent fashion. YafO binding to the 50S ribosomal subunit in the translation complex induces mRNA cleavage 3' to the region protected by the ribosome; YafO alone is not able to digest mRNA. This Escherichia coli (strain K12) protein is mRNA interferase toxin YafO (yafO).